The chain runs to 512 residues: Retinaldehyde dehydrogenase 3 (512 aa).

The disordered stretch occupies residues 1–22 (MATANGAVENGQPDRKPPALPR). N-acetylalanine is present on alanine 2. NAD(+) contacts are provided by residues lysine 204, glutamate 207, and 257–262 (GSTEVG). Catalysis depends on glutamate 280, which acts as the Proton acceptor. The active-site Nucleophile is the cysteine 314. 2 residues coordinate NAD(+): glutamine 361 and glutamate 411.

Belongs to the aldehyde dehydrogenase family. As to quaternary structure, homotetramer. In terms of tissue distribution, expressed at low levels in many tissues and at higher levels in salivary gland, stomach, and kidney.

The protein localises to the cytoplasm. The enzyme catalyses all-trans-retinal + NAD(+) + H2O = all-trans-retinoate + NADH + 2 H(+). It catalyses the reaction retinal + NAD(+) + H2O = retinoate + NADH + 2 H(+). It carries out the reaction all-trans-13,14-dihydroretinal + NAD(+) + H2O = all-trans-13,14-dihydroretinoate + NADH + 2 H(+). It participates in cofactor metabolism; retinol metabolism. Functionally, catalyzes the NAD-dependent oxidation of aldehyde substrates, such as all-trans-retinal and all-trans-13,14-dihydroretinal, to their corresponding carboxylic acids, all-trans-retinoate and all-trans-13,14-dihydroretinoate, respectively. High specificity for all-trans-retinal as substrate, can also accept acetaldehyde as substrate in vitro but with lower affinity. Required for the biosynthesis of normal levels of retinoate in the embryonic ocular and nasal regions; a critical lipid in the embryonic development of the eye and the nasal region. This chain is Retinaldehyde dehydrogenase 3 (ALDH1A3), found in Homo sapiens (Human).